The following is a 400-amino-acid chain: GTPase Obg (400 aa).

The Obg domain occupies M1 to L159. The OBG-type G domain occupies A160–D333. Residues G166–S173, F191–V195, D213–G216, N283–D286, and S314–I316 contribute to the GTP site. Mg(2+)-binding residues include S173 and T193.

This sequence belongs to the TRAFAC class OBG-HflX-like GTPase superfamily. OBG GTPase family. In terms of assembly, monomer. Mg(2+) is required as a cofactor.

It localises to the cytoplasm. In terms of biological role, an essential GTPase which binds GTP, GDP and possibly (p)ppGpp with moderate affinity, with high nucleotide exchange rates and a fairly low GTP hydrolysis rate. Plays a role in control of the cell cycle, stress response, ribosome biogenesis and in those bacteria that undergo differentiation, in morphogenesis control. This chain is GTPase Obg, found in Aeromonas salmonicida (strain A449).